An 84-amino-acid chain; its full sequence is Small ribosomal subunit protein bS18 (84 aa).

It belongs to the bacterial ribosomal protein bS18 family. In terms of assembly, part of the 30S ribosomal subunit. Forms a tight heterodimer with protein bS6.

Binds as a heterodimer with protein bS6 to the central domain of the 16S rRNA, where it helps stabilize the platform of the 30S subunit. The protein is Small ribosomal subunit protein bS18 of Vesicomyosocius okutanii subsp. Calyptogena okutanii (strain HA).